Reading from the N-terminus, the 295-residue chain is ATP synthase gamma chain (295 aa).

It belongs to the ATPase gamma chain family. In terms of assembly, F-type ATPases have 2 components, CF(1) - the catalytic core - and CF(0) - the membrane proton channel. CF(1) has five subunits: alpha(3), beta(3), gamma(1), delta(1), epsilon(1). CF(0) has three main subunits: a, b and c.

The protein resides in the cell membrane. Produces ATP from ADP in the presence of a proton gradient across the membrane. The gamma chain is believed to be important in regulating ATPase activity and the flow of protons through the CF(0) complex. The polypeptide is ATP synthase gamma chain (Caldanaerobacter subterraneus subsp. tengcongensis (strain DSM 15242 / JCM 11007 / NBRC 100824 / MB4) (Thermoanaerobacter tengcongensis)).